Reading from the N-terminus, the 523-residue chain is GMP synthase [glutamine-hydrolyzing] (523 aa).

The Glutamine amidotransferase type-1 domain maps to 8–205 (KILILDFGSQ…VVNICGCATN (198 aa)). Catalysis depends on Cys85, which acts as the Nucleophile. Residues His179 and Glu181 contribute to the active site. A GMPS ATP-PPase domain is found at 206-398 (WTPENIIEDA…LGLPAEMLNR (193 aa)). 233 to 239 (SGGVDSS) provides a ligand contact to ATP.

Homodimer.

The enzyme catalyses XMP + L-glutamine + ATP + H2O = GMP + L-glutamate + AMP + diphosphate + 2 H(+). It participates in purine metabolism; GMP biosynthesis; GMP from XMP (L-Gln route): step 1/1. Its function is as follows. Catalyzes the synthesis of GMP from XMP. This Actinobacillus succinogenes (strain ATCC 55618 / DSM 22257 / CCUG 43843 / 130Z) protein is GMP synthase [glutamine-hydrolyzing].